A 191-amino-acid chain; its full sequence is Adenylate kinase (191 aa).

10 to 15 lines the ATP pocket; that stretch reads GAGKGT. The tract at residues 30–59 is NMP; it reads STGDMLRAARTSGTEMGNLVAGVMDRGELV. Residues Thr31, Arg36, 57–59, 83–86, and Gln90 each bind AMP; these read ELV and GFPR. Positions 124–140 are LID; sequence NRAKEAAAAGQPVRADD. Arg125 provides a ligand contact to ATP. Positions 137 and 148 each coordinate AMP. Gly176 is an ATP binding site.

The protein belongs to the adenylate kinase family. In terms of assembly, monomer.

It is found in the cytoplasm. It carries out the reaction AMP + ATP = 2 ADP. Its pathway is purine metabolism; AMP biosynthesis via salvage pathway; AMP from ADP: step 1/1. Catalyzes the reversible transfer of the terminal phosphate group between ATP and AMP. Plays an important role in cellular energy homeostasis and in adenine nucleotide metabolism. The protein is Adenylate kinase of Jannaschia sp. (strain CCS1).